Reading from the N-terminus, the 445-residue chain is Argininosuccinate lyase (445 aa).

This sequence belongs to the lyase 1 family. Argininosuccinate lyase subfamily.

It is found in the cytoplasm. The enzyme catalyses 2-(N(omega)-L-arginino)succinate = fumarate + L-arginine. It functions in the pathway amino-acid biosynthesis; L-arginine biosynthesis; L-arginine from L-ornithine and carbamoyl phosphate: step 3/3. The chain is Argininosuccinate lyase from Xylella fastidiosa (strain Temecula1 / ATCC 700964).